We begin with the raw amino-acid sequence, 238 residues long: MSAPKYKRILLKLSGEALMGSDAYGINPQTIAAICGEIKAVADMGVEIGVVIGGGNIFRGMAGTATGMDRATADYMGMLATVMNAMALSDAFRQCGLNARVQSALNIEQVVEPYIRGKAIRYLEEGKIVIFGAGTGNPFFTTDTAAALRGSEIGAEIVLKATKVDGIYSADPKKDPSATRYDKISFNEAISKNLAVMDATAFALCRDQKLPINVFSIFKTGALKRVVCGEDEGTLVYC.

12–15 (KLSG) is an ATP binding site. Gly54 contributes to the UMP binding site. ATP-binding residues include Gly55 and Arg59. Residues Asp74 and 135-142 (TGNPFFTT) each bind UMP. The ATP site is built by Thr162, Tyr168, and Asp171.

It belongs to the UMP kinase family. Homohexamer.

The protein resides in the cytoplasm. The catalysed reaction is UMP + ATP = UDP + ADP. It functions in the pathway pyrimidine metabolism; CTP biosynthesis via de novo pathway; UDP from UMP (UMPK route): step 1/1. Inhibited by UTP. Catalyzes the reversible phosphorylation of UMP to UDP. The polypeptide is Uridylate kinase (Dechloromonas aromatica (strain RCB)).